Reading from the N-terminus, the 70-residue chain is Large ribosomal subunit protein uL30 (70 aa).

Belongs to the universal ribosomal protein uL30 family. In terms of assembly, part of the 50S ribosomal subunit.

The sequence is that of Large ribosomal subunit protein uL30 from Renibacterium salmoninarum (strain ATCC 33209 / DSM 20767 / JCM 11484 / NBRC 15589 / NCIMB 2235).